Here is a 451-residue protein sequence, read N- to C-terminus: Tubulin gamma-2 chain (451 aa).

Ser-131 carries the post-translational modification Phosphoserine; by BRSK1. A GTP-binding site is contributed by 142-148 (AGGTGSG).

The protein belongs to the tubulin family. As to quaternary structure, component of the gamma-tubulin ring complex (gTuRC) consisting of TUBGCP2, TUBGCP3, TUBGCP4, TUBGCP5 and TUBGCP6 and gamma-tubulin TUBG1 or TUBG2. TUBGCP2, TUBGCP3, TUBGCP4, TUBGCP5 and TUBGCP6 assemble in a 5:5:2:1:1 stoichiometry; each is associated with a gamma-tubulin, thereby arranging 14 gamma-tubulins in a helical manner. Gamma-tubulin at the first position is blocked by TUBGCP3 at the last position, allowing 13 protafilaments to grow into a microtubule. Interacts with alpha-beta tubulin heterodimers; the interaction allows microtubules to nucleate from the gTuRC. Phosphorylation at Ser-131 by BRSK1 regulates centrosome duplication, possibly by mediating relocation of gamma-tubulin and its associated proteins from the cytoplasm to the centrosome.

It is found in the cytoplasm. The protein resides in the cytoskeleton. It localises to the microtubule organizing center. The protein localises to the centrosome. In terms of biological role, tubulin is the major constituent of microtubules, protein filaments consisting of alpha- and beta-tubulin heterodimers. Gamma-tubulin is a key component of the gamma-tubulin ring complex (gTuRC) which mediates microtubule nucleation. The gTuRC regulates the minus-end nucleation of alpha-beta tubulin heterodimers that grow into microtubule protafilaments, a critical step in centrosome duplication and spindle formation. The sequence is that of Tubulin gamma-2 chain (TUBG2) from Bos taurus (Bovine).